Consider the following 622-residue polypeptide: Probable ATP-dependent RNA helicase DDX41 (622 aa).

Positions 1–15 are enriched in basic and acidic residues; the sequence is MEESEPERKRARTDE. Disordered stretches follow at residues 1 to 39 and 52 to 84; these read MEESEPERKRARTDEVPAGGSRSEAEDEDDEDYVPYVPL and QRRRKGAAEEEQQDSGSEPRGDEDDIPLGPQSN. Serine 4 is modified (phosphoserine). At lysine 9 the chain carries N6-acetyllysine. Residue lysine 9 forms a Glycyl lysine isopeptide (Lys-Gly) (interchain with G-Cter in ubiquitin) linkage. Phosphoserine is present on residues serine 21 and serine 23. Tyrosine 33 carries the post-translational modification Phosphotyrosine. Lysine 115 is covalently cross-linked (Glycyl lysine isopeptide (Lys-Gly) (interchain with G-Cter in ubiquitin)). Residues 181–209 carry the Q motif motif; it reads KSFKEMKFPAAILRGLKKKGIHHPTPIQI. Residues 212–396 enclose the Helicase ATP-binding domain; that stretch reads IPTILSGRDM…KSALVKPVTI (185 aa). 225 to 232 serves as a coordination point for ATP; it reads AFTGSGKT. The DEAD box motif lies at 344-347; it reads DEAD. Residues 407-567 form the Helicase C-terminal domain; that stretch reads DVIQEVEYVK…KVPPVLQVLH (161 aa). Tyrosine 414 is subject to Phosphotyrosine; by BTK. Residues lysine 416 and lysine 442 each participate in a glycyl lysine isopeptide (Lys-Gly) (interchain with G-Cter in SUMO2) cross-link. The CCHC-type zinc finger occupies 580–597; that stretch reads RGCAFCGGLGHRITDCPK.

This sequence belongs to the DEAD box helicase family. DDX41 subfamily. In terms of assembly, identified in the spliceosome C complex. Interacts with ERCC6. Interacts with FAM50A. Interacts with STING1. Interacts with CGAS. Interacts with several spliceosomes components such as PRP19 or CDC5L. Post-translationally, acetylation at Lys-9 regulates the nuclear/cytoplasmic localization. In terms of processing, phosphorylated by BTK; phosphorylation induces binding to dsDNA and STING1. 'Lys-48'-linked ubiquitinated and degraded by TRIM21 leading to negative regulation of the innate immune response to intracellular dsDNA.

The protein resides in the nucleus. It localises to the cytoplasm. The enzyme catalyses ATP + H2O = ADP + phosphate + H(+). In terms of biological role, multifunctional protein that participates in many aspects of cellular RNA metabolism. Plays pivotal roles in innate immune sensing and hematopoietic homeostasis. Recognizes foreign or self-nucleic acids generated during microbial infection, thereby initiating anti-pathogen responses. Mechanistically, phosphorylation by BTK allows binding to dsDNA leading to interaction with STING1. Modulates the homeostasis of dsDNA through its ATP-dependent DNA-unwinding activity and ATP-independent strand-annealing activity. In turn, induces STING1-mediated type I interferon and cytokine responses to DNA and DNA viruses. Selectively modulates the transcription of certain immunity-associated genes by regulating their alternative splicing. Binds to RNA (R)-loops, structures consisting of DNA/RNA hybrids and a displaced strand of DNA that occur during transcription, and prevents their accumulation, thereby maintaining genome stability. Also participates in pre-mRNA splicing, translational regulation and snoRNA processing, which is essential for ribosome biogenesis. The sequence is that of Probable ATP-dependent RNA helicase DDX41 (DDX41) from Homo sapiens (Human).